An 80-amino-acid polypeptide reads, in one-letter code: Anaphase-promoting complex subunit hcn1 (80 aa).

The residue at position 1 (Met1) is an N-acetylmethionine. Residues 26-54 (QTLDSESTTEEALQKNEESTRLSPEKKKI) form a disordered region. Positions 37–54 (ALQKNEESTRLSPEKKKI) are enriched in basic and acidic residues.

In terms of assembly, the APC/C is composed of at least 13 subunits: apc1, apc2, nuc2, apc4, apc5, cut9, apc8, apc10, apc11, hcn1, apc13, apc14 and apc15. Interacts directly (via N-terminus) with cut9.

Its function is as follows. Component of the anaphase promoting complex/cyclosome (APC/C), a cell cycle-regulated E3 ubiquitin-protein ligase complex that controls progression through mitosis and the G1 phase of the cell cycle. The APC/C is thought to confer substrate specificity and, in the presence of ubiquitin-conjugating E2 enzymes, it catalyzes the formation of protein-ubiquitin conjugates that are subsequently degraded by the 26S proteasome. Has a role in assembling cut9 in the 20S APC/cyclosome. In Schizosaccharomyces pombe (strain 972 / ATCC 24843) (Fission yeast), this protein is Anaphase-promoting complex subunit hcn1 (hcn1).